We begin with the raw amino-acid sequence, 134 residues long: Small ribosomal subunit protein uS11 (134 aa).

Residues 115–134 are disordered; sequence VTPIPTDSTRRKGGRRGRRL. Positions 125-134 are enriched in basic residues; that stretch reads RKGGRRGRRL.

This sequence belongs to the universal ribosomal protein uS11 family.

In Syntrichia ruralis (Great hairy screw-moss), this protein is Small ribosomal subunit protein uS11 (RPS14).